Consider the following 977-residue polypeptide: Vacuolar membrane protease (977 aa).

Topologically, residues 1 to 17 (MARSRTAGRCNPFAFYR) are cytoplasmic. A helical transmembrane segment spans residues 18-38 (VPVTVFVTLIYVALLAPIIVV). The Vacuolar portion of the chain corresponds to 39–383 (HHILPAVPES…AFAVFEIHTL (345 aa)). Residues Asn-113 and Asn-116 are each glycosylated (N-linked (GlcNAc...) asparagine). Zn(2+) contacts are provided by His-166 and Asp-178. Catalysis depends on Glu-212, which acts as the Proton acceptor. The Zn(2+) site is built by Glu-213, Glu-238, and His-311. Residues 384–404 (FALSVTLLIVGPLTLFITSII) form a helical membrane-spanning segment. Residues 405–438 (LANQDRMYLFGISVPVDDGFGSVPLRGWRGFFRF) are Cytoplasmic-facing. A helical membrane pass occupies residues 439 to 459 (PFIFGSTTASVVALAYLMAKI). Over 460 to 469 (NPMIAHSSEY) the chain is Vacuolar. Residues 470–490 (AVWSMMISAWVFVAWFLSRIA) form a helical membrane-spanning segment. Over 491–500 (NFARPSALHR) the chain is Cytoplasmic. Residues 501–521 (IYVLTWMFLLTWVLLVITTVY) form a helical membrane-spanning segment. Topologically, residues 522 to 525 (ENRD) are vacuolar. Residues 526–546 (GIASGYFVIFYAFGTFMATWI) form a helical membrane-spanning segment. Residues 547-659 (SYLELFSLPK…WSANLPKWTW (113 aa)) are Cytoplasmic-facing. A compositionally biased stretch (polar residues) spans 566 to 576 (GQISSRPTSLG). The tract at residues 566–604 (GQISSRPTSLGGSRLLTPSGESVGQHPEDEEPTESTSLL) is disordered. The chain crosses the membrane as a helical span at residues 660 to 680 (ILQFLLIAPIVIILIGQLGLL). At 681–696 (ITSAIHQTMQDGSSTL) the chain is on the vacuolar side. Residues 697 to 717 (VPYLIIALLTTFLFMPTLPFI) traverse the membrane as a helical segment. Topologically, residues 718–726 (HRYTYHIPT) are cytoplasmic. A helical membrane pass occupies residues 727 to 747 (FLFLIFVATLVYNLVAFPFSG). Residues 748–977 (NNRTKLFFLQ…LVKGSRSFEV (230 aa)) lie on the Vacuolar side of the membrane. Asn-749 and Asn-791 each carry an N-linked (GlcNAc...) asparagine glycan.

This sequence belongs to the peptidase M28 family. Zn(2+) is required as a cofactor.

It localises to the vacuole membrane. Its function is as follows. May be involved in vacuolar sorting and osmoregulation. This is Vacuolar membrane protease from Talaromyces marneffei (strain ATCC 18224 / CBS 334.59 / QM 7333) (Penicillium marneffei).